The following is a 556-amino-acid chain: Vetispiradiene synthase 1 (556 aa).

Aspartate 309, aspartate 313, aspartate 452, threonine 456, and glutamate 460 together coordinate Mg(2+). Positions 309 to 313 match the DDXXD motif motif; sequence DDTFD.

This sequence belongs to the terpene synthase family. Tpsa subfamily. Mg(2+) serves as cofactor.

It localises to the cytoplasm. It carries out the reaction (2E,6E)-farnesyl diphosphate = (-)-vetispiradiene + diphosphate. It participates in secondary metabolite biosynthesis; terpenoid biosynthesis. In terms of biological role, sesquiterpene synthase that catalyzes the formation of vetispiradiene from trans,trans-farnesyl diphosphate. The initial internal cyclization produces the monocyclic intermediate germacrene A. This Solanum tuberosum (Potato) protein is Vetispiradiene synthase 1 (PVS1).